A 183-amino-acid chain; its full sequence is Large ribosomal subunit protein uL5 (183 aa).

This sequence belongs to the universal ribosomal protein uL5 family. As to quaternary structure, part of the 50S ribosomal subunit; contacts the 5S rRNA and probably tRNA. Forms a bridge to the 30S subunit in the 70S ribosome.

Functionally, this is one of the proteins that bind and probably mediate the attachment of the 5S RNA into the large ribosomal subunit, where it forms part of the central protuberance. In the 70S ribosome it contacts protein S13 of the 30S subunit (bridge B1b), connecting the 2 subunits; this bridge is implicated in subunit movement. May contact the P site tRNA; the 5S rRNA and some of its associated proteins might help stabilize positioning of ribosome-bound tRNAs. The protein is Large ribosomal subunit protein uL5 of Thermococcus kodakarensis (strain ATCC BAA-918 / JCM 12380 / KOD1) (Pyrococcus kodakaraensis (strain KOD1)).